The primary structure comprises 442 residues: Trigger factor (442 aa).

Residues 163 to 248 (NDLVTINYCI…ILNVEEKQEN (86 aa)) form the PPIase FKBP-type domain.

This sequence belongs to the FKBP-type PPIase family. Tig subfamily.

The protein resides in the cytoplasm. The enzyme catalyses [protein]-peptidylproline (omega=180) = [protein]-peptidylproline (omega=0). Its function is as follows. Involved in protein export. Acts as a chaperone by maintaining the newly synthesized protein in an open conformation. Functions as a peptidyl-prolyl cis-trans isomerase. The chain is Trigger factor from Buchnera aphidicola subsp. Schizaphis graminum (strain Sg).